Consider the following 189-residue polypeptide: Putative manganese efflux pump MntP (189 aa).

6 helical membrane passes run 3 to 23, 41 to 61, 62 to 82, 104 to 124, 132 to 152, and 168 to 188; these read PVAT…AAIG, LIFG…GKAA, AQYV…VLGA, FWLL…VGAG, IYST…IGVM, and AGGI…LNIF.

It belongs to the MntP (TC 9.B.29) family.

Its subcellular location is the cell inner membrane. In terms of biological role, probably functions as a manganese efflux pump. In Paraburkholderia phytofirmans (strain DSM 17436 / LMG 22146 / PsJN) (Burkholderia phytofirmans), this protein is Putative manganese efflux pump MntP.